The primary structure comprises 502 residues: Transmembrane prolyl 4-hydroxylase (502 aa).

Residues 1 to 29 (MAAAAVTGQRPETAAAEEASRPQWAPPDH) form a disordered region. Topologically, residues 1–60 (MAAAAVTGQRPETAAAEEASRPQWAPPDHCQAQAAAGLGDGEDAPVRPLCKPRGICSRAY) are cytoplasmic. A helical; Signal-anchor for type II membrane protein transmembrane segment spans residues 61–81 (FLVLMVFVHLYLGNVLALLLF). Residues 82–502 (VHYSNGDESS…RAYRDARVEL (421 aa)) lie on the Lumenal side of the membrane. The segment at 89 to 111 (ESSDPGPQHRAQGPGPEPTLGPL) is disordered. 2 consecutive EF-hand domains span residues 185 to 220 (TMQV…GNGW) and 224 to 259 (PESI…DFHK). 9 residues coordinate Ca(2+): D198, N200, D202, H204, E209, D237, D239, D241, and E248. The Fe2OG dioxygenase domain maps to 310–460 (LSEPLQVVRY…KWIANNWINV (151 aa)). Positions 328 and 330 each coordinate Fe cation. Residues N348 and N368 are each glycosylated (N-linked (GlcNAc...) asparagine). E374 serves as a coordination point for Fe cation. N-linked (GlcNAc...) asparagine glycosylation is present at N382. K451 provides a ligand contact to 2-oxoglutarate.

As to quaternary structure, homodimer. Fe(2+) is required as a cofactor. It depends on L-ascorbate as a cofactor. Post-translationally, glycosylated. Widely expressed with highest levels in adult pancreas, heart, skeletal muscle, brain, placenta, kidney and adrenal gland. Expressed at lower levels in epiphyseal cartilage and in fibroblasts.

Its subcellular location is the endoplasmic reticulum membrane. The catalysed reaction is L-prolyl-[hypoxia-inducible factor alpha subunit] + 2-oxoglutarate + O2 = trans-4-hydroxy-L-prolyl-[hypoxia-inducible factor alpha subunit] + succinate + CO2. Catalyzes the post-translational formation of 4-hydroxyproline in hypoxia-inducible factor (HIF) alpha proteins. Hydroxylates HIF1A at 'Pro-402' and 'Pro-564'. May function as a cellular oxygen sensor and, under normoxic conditions, may target HIF through the hydroxylation for proteasomal degradation via the von Hippel-Lindau ubiquitination complex. The polypeptide is Transmembrane prolyl 4-hydroxylase (P4HTM) (Homo sapiens (Human)).